We begin with the raw amino-acid sequence, 745 residues long: Mitogen-activated protein kinase kinase kinase zak-1 (745 aa).

A Protein kinase domain is found at I31 to M305. ATP-binding positions include I37–V45 and K63. Catalysis depends on D159, which acts as the Proton acceptor. A coiled-coil region spans residues L307–V352. Positions W366–T438 constitute an SAM domain. The segment at L693–T745 is disordered. Positions W735–T745 are enriched in basic residues.

This sequence belongs to the protein kinase superfamily. STE Ser/Thr protein kinase family. MAP kinase kinase kinase subfamily. It depends on Mg(2+) as a cofactor. In terms of tissue distribution, widely expressed; expressed in most tissues, including intestines, muscle and the nervous system.

It localises to the cytoplasm. It is found in the nucleus. It catalyses the reaction L-seryl-[protein] + ATP = O-phospho-L-seryl-[protein] + ADP + H(+). The enzyme catalyses L-threonyl-[protein] + ATP = O-phospho-L-threonyl-[protein] + ADP + H(+). In terms of biological role, stress-activated component of a protein kinase signal transduction cascade that promotes programmed cell death in response to ribotoxic stress. Acts as the proximal sensor of ribotoxic stress: directly binds to the ribosome, thereby acting as a sentinel for colliding ribosomes. Upon ribosome collisions, activates the stress-activated protein kinase signal transduction cascade, leading to programmed cell death. Acts by catalyzing phosphorylation of MAP kinase kinases, leading to activation of the JNK and MAP kinase p38 pathways. The chain is Mitogen-activated protein kinase kinase kinase zak-1 from Caenorhabditis elegans.